Reading from the N-terminus, the 397-residue chain is Enoyl-[acyl-carrier-protein] reductase [NADH] (397 aa).

Residues 48–53 (GASTGY), 74–75 (FE), 111–112 (DA), and 139–140 (LA) each bind NAD(+). Y224 is a binding site for substrate. The Proton donor role is filled by Y234. NAD(+) is bound by residues K243 and 272 to 274 (VVT).

The protein belongs to the TER reductase family. Monomer.

The catalysed reaction is a 2,3-saturated acyl-[ACP] + NAD(+) = a (2E)-enoyl-[ACP] + NADH + H(+). It participates in lipid metabolism; fatty acid biosynthesis. Involved in the final reduction of the elongation cycle of fatty acid synthesis (FAS II). Catalyzes the reduction of a carbon-carbon double bond in an enoyl moiety that is covalently linked to an acyl carrier protein (ACP). This chain is Enoyl-[acyl-carrier-protein] reductase [NADH], found in Pseudomonas fluorescens (strain SBW25).